A 447-amino-acid chain; its full sequence is Phosphoglucosamine mutase (447 aa).

Ser-104 acts as the Phosphoserine intermediate in catalysis. Mg(2+) contacts are provided by Ser-104, Asp-243, Asp-245, and Asp-247. Ser-104 carries the post-translational modification Phosphoserine.

The protein belongs to the phosphohexose mutase family. Mg(2+) is required as a cofactor. Post-translationally, activated by phosphorylation.

It catalyses the reaction alpha-D-glucosamine 1-phosphate = D-glucosamine 6-phosphate. Its function is as follows. Catalyzes the conversion of glucosamine-6-phosphate to glucosamine-1-phosphate. The polypeptide is Phosphoglucosamine mutase (Corynebacterium glutamicum (strain ATCC 13032 / DSM 20300 / JCM 1318 / BCRC 11384 / CCUG 27702 / LMG 3730 / NBRC 12168 / NCIMB 10025 / NRRL B-2784 / 534)).